Here is a 179-residue protein sequence, read N- to C-terminus: MARLFDHYKNIVIKELIQQFNYKTVMQVPKITKITLNMGVGEAAVDKKIMENAVSDLEKISAQKPIITKAKKSIATFKIRQGYPVGCMVTLRGIKMYEFLDRLVSIAIPRIRDFRGIGGKGFDGHGNFNMGIKEQIIFPEIDYDKIDKLRGLNITMTTTAKTDIEAKALLSAFKFPFKN.

It belongs to the universal ribosomal protein uL5 family. Part of the 50S ribosomal subunit; part of the 5S rRNA/L5/L18/L25 subcomplex. Contacts the 5S rRNA and the P site tRNA. Forms a bridge to the 30S subunit in the 70S ribosome.

This is one of the proteins that bind and probably mediate the attachment of the 5S RNA into the large ribosomal subunit, where it forms part of the central protuberance. In the 70S ribosome it contacts protein S13 of the 30S subunit (bridge B1b), connecting the 2 subunits; this bridge is implicated in subunit movement. Contacts the P site tRNA; the 5S rRNA and some of its associated proteins might help stabilize positioning of ribosome-bound tRNAs. In Nitrosomonas eutropha (strain DSM 101675 / C91 / Nm57), this protein is Large ribosomal subunit protein uL5.